We begin with the raw amino-acid sequence, 398 residues long: Protein FAM53A (398 aa).

Positions 85-253 (QWQPQSPRPG…TSTPALGGRR (169 aa)) are disordered. Polar residues predominate over residues 103–115 (VDPSESTGSSTAP). Over residues 123 to 132 (SLSEPEELVR) the composition is skewed to basic and acidic residues. S125 is subject to Phosphoserine. Low complexity-rich tracts occupy residues 176-193 (STGP…ASGG) and 234-250 (TPLP…PALG). A Nuclear localization signal motif is present at residues 268 to 276 (KRSRRKRRR). S301 and S304 each carry phosphoserine. The segment at 336-398 (PGCSQRGLRT…ELDLEQIENN (63 aa)) is disordered. Residues 363–375 (GSRRSSGDPRDGD) are compositionally biased toward basic and acidic residues.

Belongs to the FAM53 family.

It is found in the nucleus. In terms of biological role, may play an important role in neural development; the dorsomedial roof of the third ventricle. This Homo sapiens (Human) protein is Protein FAM53A.